The primary structure comprises 351 residues: Delta(7)-sterol 5(6)-desaturase (351 aa).

A run of 3 helical transmembrane segments spans residues 88–108, 136–156, and 173–193; these read LSLFLVTTVFGWLLYLIVASF, GLGAIPYMAVMTVPWFLLELH, and VRLALEALFFILFTDFGIYLL. Residues 180-305 enclose the Fatty acid hydroxylase domain; the sequence is LFFILFTDFG…FTTLWDRLGG (126 aa). The Histidine box-1 signature appears at 194-198; that stretch reads HRWLH. Residues 207–211 carry the Histidine box-2 motif; it reads HKKHH. A helical membrane pass occupies residues 237-257; it reads HLFPMLFPLHKVSYLVLFTFV. The Histidine box-3 motif lies at 282–286; it reads HTVHH.

This sequence belongs to the sterol desaturase family. Fe cation is required as a cofactor.

The protein localises to the endoplasmic reticulum membrane. It carries out the reaction a Delta(7)-sterol + 2 Fe(II)-[cytochrome b5] + O2 + 2 H(+) = a Delta(5),Delta(7)-sterol + 2 Fe(III)-[cytochrome b5] + 2 H2O. The protein operates within steroid metabolism; ergosterol biosynthesis; ergosterol from zymosterol: step 3/5. Its function is as follows. Catalyzes the introduction of a C-5 double bond in the B ring of ergosterol. May contribute to the regulation of ergosterol biosynthesis. In Eremothecium gossypii (strain ATCC 10895 / CBS 109.51 / FGSC 9923 / NRRL Y-1056) (Yeast), this protein is Delta(7)-sterol 5(6)-desaturase (ERG3).